We begin with the raw amino-acid sequence, 223 residues long: Cytidylate kinase (223 aa).

17–25 (GPTASGKGT) is an ATP binding site.

This sequence belongs to the cytidylate kinase family. Type 1 subfamily.

It is found in the cytoplasm. It carries out the reaction CMP + ATP = CDP + ADP. It catalyses the reaction dCMP + ATP = dCDP + ADP. In Bordetella pertussis (strain Tohama I / ATCC BAA-589 / NCTC 13251), this protein is Cytidylate kinase.